A 372-amino-acid polypeptide reads, in one-letter code: uncharacterized protein (372 aa).

An N-terminal signal peptide occupies residues 1–19; it reads MKIFFLFIILLGIIQLSNS. Asparagine 18 carries an N-linked (GlcNAc...) asparagine glycan. Residues 20 to 160 form the MRH domain; it reads SSCNIDIAGD…IWTTKYSCAI (141 aa). Cysteine 22 and cysteine 58 form a disulfide bridge. N-linked (GlcNAc...) asparagine glycosylation is present at asparagine 59. Cysteine 128 and cysteine 158 are joined by a disulfide. The stretch at 185 to 282 forms a coiled coil; sequence NEILNEAQSN…VQFNDDIKLI (98 aa). The interval 201-233 is disordered; it reads KNEDLNNNNNNNNNNNNNNNNNNNNNNNNNKIN. Residues 206-230 show a composition bias toward low complexity; that stretch reads NNNNNNNNNNNNNNNNNNNNNNNNN.

The protein resides in the secreted. This is an uncharacterized protein from Dictyostelium discoideum (Social amoeba).